Consider the following 71-residue polypeptide: Sec-independent protein translocase protein TatA (71 aa).

Residues 1–21 form a helical membrane-spanning segment; that stretch reads MGSFSLLHWLVVLVIVLLVFG. The tract at residues 43-71 is disordered; the sequence is LREDDKPTDQLGSTSQSTASGPQQDHGKH. Over residues 52–65 the composition is skewed to polar residues; it reads QLGSTSQSTASGPQ.

It belongs to the TatA/E family. As to quaternary structure, the Tat system comprises two distinct complexes: a TatABC complex, containing multiple copies of TatA, TatB and TatC subunits, and a separate TatA complex, containing only TatA subunits. Substrates initially bind to the TatABC complex, which probably triggers association of the separate TatA complex to form the active translocon.

The protein resides in the cell inner membrane. Its function is as follows. Part of the twin-arginine translocation (Tat) system that transports large folded proteins containing a characteristic twin-arginine motif in their signal peptide across membranes. TatA could form the protein-conducting channel of the Tat system. The protein is Sec-independent protein translocase protein TatA of Xylella fastidiosa (strain 9a5c).